A 255-amino-acid polypeptide reads, in one-letter code: MELIPAIDLLEGNCVRLVQGNYNKVTKFNSDPVSQALRWEDMGASRLHIVDLDAARQGFSSNDDVIKQIAKSLSIPIQIGGGIRTSKRAKELLDYGIDRVIIGTAALEDPRLVEDLASAFPKKIVLGIDAKEGKVATRGWIEQSDVRTEDLIKQFSNAKIAAIISTDISTDGTLEGPNLKSLTSVAKVSNAPVIASGGIGSLADLISLTTLEKAGVTGVIVGRALYDNKFSLEEAIKVLLNIDLQDQPFNAKNIA.

The active-site Proton acceptor is Asp8. The active-site Proton donor is Asp129.

Belongs to the HisA/HisF family.

Its subcellular location is the cytoplasm. It catalyses the reaction 1-(5-phospho-beta-D-ribosyl)-5-[(5-phospho-beta-D-ribosylamino)methylideneamino]imidazole-4-carboxamide = 5-[(5-phospho-1-deoxy-D-ribulos-1-ylimino)methylamino]-1-(5-phospho-beta-D-ribosyl)imidazole-4-carboxamide. It participates in amino-acid biosynthesis; L-histidine biosynthesis; L-histidine from 5-phospho-alpha-D-ribose 1-diphosphate: step 4/9. The polypeptide is 1-(5-phosphoribosyl)-5-[(5-phosphoribosylamino)methylideneamino] imidazole-4-carboxamide isomerase (Prochlorococcus marinus (strain MIT 9211)).